We begin with the raw amino-acid sequence, 154 residues long: Ribosomal RNA large subunit methyltransferase H (154 aa).

S-adenosyl-L-methionine is bound by residues leucine 70, glycine 102, and leucine 121–phenylalanine 126.

It belongs to the RNA methyltransferase RlmH family. In terms of assembly, homodimer.

It is found in the cytoplasm. The catalysed reaction is pseudouridine(1915) in 23S rRNA + S-adenosyl-L-methionine = N(3)-methylpseudouridine(1915) in 23S rRNA + S-adenosyl-L-homocysteine + H(+). In terms of biological role, specifically methylates the pseudouridine at position 1915 (m3Psi1915) in 23S rRNA. This is Ribosomal RNA large subunit methyltransferase H from Geobacter metallireducens (strain ATCC 53774 / DSM 7210 / GS-15).